Here is a 425-residue protein sequence, read N- to C-terminus: L-cysteine:1D-myo-inositol 2-amino-2-deoxy-alpha-D-glucopyranoside ligase (425 aa).

Cys-43 is a binding site for Zn(2+). Residues 43–46 (CGIT), Thr-58, and 81–83 (NVT) each bind L-cysteinyl-5'-AMP. Residues 45 to 55 (ITPYDATHIGH) carry the 'HIGH' region motif. The short motif at 195 to 200 (ERGGDP) is the 'ERGGDP' region element. Trp-236 contacts L-cysteinyl-5'-AMP. Cys-240 contacts Zn(2+). An L-cysteinyl-5'-AMP-binding site is contributed by 258-260 (GSD). His-265 contacts Zn(2+). Val-295 contributes to the L-cysteinyl-5'-AMP binding site. Residues 301-305 (KMSKS) carry the 'KMSKS' region motif.

Belongs to the class-I aminoacyl-tRNA synthetase family. MshC subfamily. In terms of assembly, monomer. Zn(2+) serves as cofactor.

The catalysed reaction is 1D-myo-inositol 2-amino-2-deoxy-alpha-D-glucopyranoside + L-cysteine + ATP = 1D-myo-inositol 2-(L-cysteinylamino)-2-deoxy-alpha-D-glucopyranoside + AMP + diphosphate + H(+). Its function is as follows. Catalyzes the ATP-dependent condensation of GlcN-Ins and L-cysteine to form L-Cys-GlcN-Ins. This Sanguibacter keddieii (strain ATCC 51767 / DSM 10542 / NCFB 3025 / ST-74) protein is L-cysteine:1D-myo-inositol 2-amino-2-deoxy-alpha-D-glucopyranoside ligase.